A 247-amino-acid polypeptide reads, in one-letter code: Uridylate kinase (247 aa).

Position 17–20 (K17–G20) interacts with ATP. G59 contacts UMP. Residues G60 and R64 each coordinate ATP. UMP-binding positions include D79 and T140–T147. Positions 167, 173, and 176 each coordinate ATP.

Belongs to the UMP kinase family. Homohexamer.

It is found in the cytoplasm. It catalyses the reaction UMP + ATP = UDP + ADP. It functions in the pathway pyrimidine metabolism; CTP biosynthesis via de novo pathway; UDP from UMP (UMPK route): step 1/1. Its activity is regulated as follows. Inhibited by UTP. In terms of biological role, catalyzes the reversible phosphorylation of UMP to UDP. The polypeptide is Uridylate kinase (Legionella pneumophila (strain Paris)).